Here is a 1941-residue protein sequence, read N- to C-terminus: WD repeat-containing protein 81 (1941 aa).

The segment at M1–M27 is disordered. The necessary and sufficient for the interaction with SQSTM1 stretch occupies residues M1–D650. The region spanning G337–Q614 is the BEACH domain. Disordered regions lie at residues G618 to V637, V694 to R718, S1022 to H1074, P1097 to E1217, P1523 to S1556, and Q1569 to L1602. Over residues L1137–L1146 the composition is skewed to polar residues. Acidic residues predominate over residues G1151 to E1174. A compositionally biased stretch (gly residues) spans S1586–S1595. WD repeat units lie at residues I1639–L1677, E1686–P1724, T1729–C1769, E1777–T1815, L1819–E1856, K1860–L1896, and Q1902–A1941.

This sequence belongs to the WD repeat WDR81 family. Interacts with WDR91; involved in early to late endosome cargo transport. Interacts with BECN1; negatively regulates the PI3 kinase/PI3K activity associated with endosomal membranes. Interacts with SQSTM1; the interaction is direct and regulates the interaction of SQSTM1 with ubiquitinated proteins. Interacts with MAP1LC3C; recruits MAP1LC3C to ubiquitinated protein aggregates in the aggrephagy process. In terms of tissue distribution, widely expressed. In the brain, highest levels in cerebellum and corpus callosum.

The protein resides in the early endosome membrane. The protein localises to the late endosome membrane. It localises to the lysosome membrane. It is found in the cytoplasmic vesicle. Its subcellular location is the autophagosome membrane. The protein resides in the mitochondrion. The protein localises to the cytoplasm. It localises to the cytosol. In terms of biological role, functions as a negative regulator of the PI3 kinase/PI3K activity associated with endosomal membranes via BECN1, a core subunit of the PI3K complex. By modifying the phosphatidylinositol 3-phosphate/PtdInsP3 content of endosomal membranes may regulate endosome fusion, recycling, sorting and early to late endosome transport. It is for instance, required for the delivery of cargos like BST2/tetherin from early to late endosome and thereby participates indirectly to their degradation by the lysosome. May also play a role in aggrephagy, the macroautophagic degradation of ubiquitinated protein aggregates. In this process, may regulate the interaction of SQSTM1 with ubiquitinated proteins and also recruit MAP1LC3C. May also be involved in maintenance of normal mitochondrial structure and organization. The chain is WD repeat-containing protein 81 from Homo sapiens (Human).